The primary structure comprises 236 residues: uncharacterized protein (236 aa).

A compositionally biased stretch (basic residues) spans 1–12; it reads MKLLGHRKSHGH. A disordered region spans residues 1 to 108; the sequence is MKLLGHRKSH…KAANRARMTE (108 aa). Positions 13 to 31 are enriched in basic and acidic residues; it reads QRADASPDAGSKDGCRPDS. Residues 32 to 47 are compositionally biased toward low complexity; that stretch reads GRTSGSDTSRGSQTTG. The span at 52 to 65 shows a compositional bias: basic residues; the sequence is PTPKRNQSRRHTKK. Over residues 67–78 the composition is skewed to low complexity; that stretch reads PVAPAPMTAAQA. The span at 90 to 108 shows a compositional bias: basic and acidic residues; it reads LSREERRAEKAANRARMTE. The next 2 membrane-spanning stretches (helical) occupy residues 142–162 and 166–186; these read NLLG…FAVP and FYLS…AIIL.

It is found in the cell membrane. This is an uncharacterized protein from Mycobacterium tuberculosis (strain CDC 1551 / Oshkosh).